The chain runs to 1117 residues: MGQTKSKIKSKYASYLSFIKILLKRGGVKVSTKNLIKLFQIIEQFCPWFPEQGTLDLKDWKRIGKELKQAGRKGNIIPLTVWNDWAIIKAALEPFQTEEDSISVSDAPGSGIIDCNEKTRKKSQKETESLHCEYVAEPVMAQSTQNVDYNQLQEVIYPETLKLEGKGPELVGPSESKPRGTSPLPAGQVPVTLQPQKQVKENKTQPPVAYQYWPPAELQYRPPPESQYGYPGMPPAPQGRAPYPQPPTRRLNPTAPPSRQGSELHEIIDKSRKEGDTEAWQFPVTLEPMPPGEGAQEGEPPTVEARYKSFSIKILKDMKEGVKQYGPNSPYMRTLLDSIAHGHRLIPYDWEILAKSSLSPSQFLQFKTWWIDGVQEQVRRNRAANPPVNIDADQLLGIGQNWSTISQQALMQNEAIEQVRAICLRAWEKIQDPGSTCPSFNTVRQGSKEPYPDFVARLQDVAQKSIADEKARKVIVELMAYENANPECQSAIKPLKGKVPAGSDVISEYVKACDGIGGAMHKAMLMAQAITGVVLGGQVRTFGGKCYNCGQIGHLKKNCPVLNKQNITIQATTTGREPPDLCPRCKKGKHWASQCRSKFDKNGQPLSGNEQRGQPQAPQQTGAFPIQPFVPQGFQGQQPPLSQVFQGISQLPQYNNCPPPQVAVQQVDLCTIQAVSLLPGEPPQKIPTGVYGPLPEGTVGLILGRSSLNLKGVQIHTSVVDSDYKGEIQLVISSSVPWSASPGDRIAQLLLLPYIKGGNSEIKRIGGLGSTDPTGKAAYWASQVSENRPVCKAIIQGKQFEGLVDTGADVSIIALNQWPKNWPKQKAVTGLVGIGTASEVYQSMEILHCLGPDNQESTVQPMITSIPLNLWGRDLLQQWGAEITMPAPLYSPTSQKIMTKRGYIPGKGLGKNEDGIKIPFEAKINQKREGIGYPFLGAATIEPPKPIPLTWKTEKPVWVNQWPLPKQKLEALHLLANEQLEKGHIEPSFSPWNSPVFVIQKKSGKWRMLTDLRAVNAVIQPMGPLQPGLPSPAMIPKDWPLIIIDLKDCFFTIPLAEQDCEKFAFTIPAINNKEPATRFQWKVLPQGMLNSPTICQTFVGRALQPVKVFRLLYYSLY.

Gly2 carries the N-myristoyl glycine lipid modification. One can recognise a Reverse transcriptase domain in the interval 58-195 (KDWKRIGKEL…AGQVPVTLQP (138 aa)). A disordered region spans residues 165 to 264 (GKGPELVGPS…APPSRQGSEL (100 aa)). A compositionally biased stretch (pro residues) spans 232 to 247 (GMPPAPQGRAPYPQPP). 2 CCHC-type zinc fingers span residues 544-561 (GKCY…NCPV) and 580-597 (DLCP…QCRS). A disordered region spans residues 598–629 (KFDKNGQPLSGNEQRGQPQAPQQTGAFPIQPF). Residues 604–622 (QPLSGNEQRGQPQAPQQTG) are compositionally biased toward polar residues. Residues 800 to 875 (FEGLVDTGAD…IPLNLWGRDL (76 aa)) enclose the Peptidase A2 domain. The active site involves Asp805. One can recognise a G-patch domain in the interval 890 to 936 (YSPTSQKIMTKRGYIPGKGLGKNEDGIKIPFEAKINQKREGIGYPFL).

This sequence belongs to the beta type-B retroviral polymerase family. HERV class-II K(HML-2) pol subfamily. Post-translationally, myristoylation is essential for retroviral assembly. Alteration of the glycine residue leads to a block in the budding of particles and an accumulation of Gag inside the cell. Specific enzymatic cleavages may yield mature proteins.

It is found in the cell membrane. It carries out the reaction Processing at the authentic HIV-1 PR recognition site and release of the mature p17 matrix and the p24 capsid protein, as a result of the cleavage of the -SQNY-|-PIVQ- cleavage site.. The catalysed reaction is DNA(n) + a 2'-deoxyribonucleoside 5'-triphosphate = DNA(n+1) + diphosphate. The enzyme catalyses Endonucleolytic cleavage to 5'-phosphomonoester.. Functionally, the products of the Gag polyproteins of infectious retroviruses perform highly complex orchestrated tasks during the assembly, budding, maturation, and infection stages of the viral replication cycle. During viral assembly, the proteins form membrane associations and self-associations that ultimately result in budding of an immature virion from the infected cell. Gag precursors also function during viral assembly to selectively bind and package two plus strands of genomic RNA. Endogenous Gag proteins may have kept, lost or modified their original function during evolution. In terms of biological role, early post-infection, the reverse transcriptase converts the viral RNA genome into double-stranded viral DNA. The RNase H domain of the reverse transcriptase performs two functions. It degrades the RNA template and specifically removes the RNA primer from the RNA/DNA hybrid. Following nuclear import, the integrase catalyzes the insertion of the linear, double-stranded viral DNA into the host cell chromosome. Endogenous Pol proteins may have kept, lost or modified their original function during evolution. The chain is Endogenous retrovirus group K member 9 Pol protein (ERVK-9) from Homo sapiens (Human).